Consider the following 1423-residue polypeptide: Protein phosphatase Slingshot homolog 2 (1423 aa).

The disordered stretch occupies residues methionine 1–isoleucine 37. Residues serine 9 to proline 18 are compositionally biased toward low complexity. Serine 17, serine 25, and serine 36 each carry phosphoserine. The DEK-C domain maps to glutamate 248 to glycine 303. The Tyrosine-protein phosphatase domain occupies serine 307–alanine 448. Cysteine 392 (phosphocysteine intermediate) is an active-site residue. A phosphoserine mark is found at serine 461, serine 487, serine 534, serine 631, and serine 633. Disordered stretches follow at residues threonine 617 to glutamate 641, glutamine 664 to asparagine 684, proline 696 to alanine 728, glutamate 797 to proline 825, glutamate 840 to tyrosine 862, leucine 877 to valine 954, phenylalanine 962 to glutamate 981, threonine 1019 to leucine 1041, serine 1070 to serine 1108, and threonine 1144 to serine 1179. Positions lysine 621–glutamine 635 are enriched in pro residues. A compositionally biased stretch (basic and acidic residues) spans glutamine 664–glycine 680. Residues threonine 889–serine 904 are compositionally biased toward polar residues. Residues proline 910–lysine 932 are compositionally biased toward basic and acidic residues. The segment covering glutamate 941–threonine 953 has biased composition (polar residues). Polar residues predominate over residues threonine 1019–glutamate 1034. Positions threonine 1144–serine 1172 are enriched in polar residues. Serine 1217 is subject to Phosphoserine. Threonine 1422 carries the post-translational modification Phosphothreonine.

The protein belongs to the protein-tyrosine phosphatase family. As to quaternary structure, interacts with filamentous actin.

The protein localises to the cytoplasm. It is found in the cytoskeleton. It localises to the cell junction. The protein resides in the focal adhesion. Its subcellular location is the cytoplasmic vesicle. The protein localises to the secretory vesicle. It is found in the acrosome. It catalyses the reaction O-phospho-L-tyrosyl-[protein] + H2O = L-tyrosyl-[protein] + phosphate. The enzyme catalyses O-phospho-L-seryl-[protein] + H2O = L-seryl-[protein] + phosphate. The catalysed reaction is O-phospho-L-threonyl-[protein] + H2O = L-threonyl-[protein] + phosphate. Its function is as follows. Protein phosphatase which regulates actin filament dynamics. Dephosphorylates and activates the actin binding/depolymerizing factor cofilin, which subsequently binds to actin filaments and stimulates their disassembly. Inhibitory phosphorylation of cofilin is mediated by LIMK1, which may also be dephosphorylated and inactivated by this protein. Required for spermatogenesis. Involved in acrosome biogenesis, probably by regulating cofilin-mediated actin cytoskeleton remodeling during proacrosomal vesicle fusion and/or Golgi to perinuclear vesicle trafficking. The sequence is that of Protein phosphatase Slingshot homolog 2 (SSH2) from Homo sapiens (Human).